Here is a 206-residue protein sequence, read N- to C-terminus: Small ribosomal subunit protein uS4 (206 aa).

The region spanning 96-157 is the S4 RNA-binding domain; it reads SRLDNVVYRM…KAKKQVRIQE (62 aa).

The protein belongs to the universal ribosomal protein uS4 family. In terms of assembly, part of the 30S ribosomal subunit. Contacts protein S5. The interaction surface between S4 and S5 is involved in control of translational fidelity.

One of the primary rRNA binding proteins, it binds directly to 16S rRNA where it nucleates assembly of the body of the 30S subunit. In terms of biological role, with S5 and S12 plays an important role in translational accuracy. This is Small ribosomal subunit protein uS4 from Neisseria gonorrhoeae (strain ATCC 700825 / FA 1090).